The sequence spans 327 residues: GTP 3',8-cyclase (327 aa).

Positions 7 to 232 (HHDRQFRYLR…IKRDRTAGPA (226 aa)) constitute a Radical SAM core domain. Residue Arg-16 coordinates GTP. Residues Cys-23 and Cys-27 each contribute to the [4Fe-4S] cluster site. Tyr-29 is an S-adenosyl-L-methionine binding site. Cys-30 is a [4Fe-4S] cluster binding site. Arg-66 lines the GTP pocket. S-adenosyl-L-methionine is bound at residue Gly-70. Position 97 (Thr-97) interacts with GTP. Position 121 (Ser-121) interacts with S-adenosyl-L-methionine. Position 158 (Lys-158) interacts with GTP. Met-192 contributes to the S-adenosyl-L-methionine binding site. [4Fe-4S] cluster-binding residues include Cys-255 and Cys-258. 260–262 (RLR) lines the GTP pocket. Position 272 (Cys-272) interacts with [4Fe-4S] cluster.

This sequence belongs to the radical SAM superfamily. MoaA family. As to quaternary structure, monomer and homodimer. It depends on [4Fe-4S] cluster as a cofactor.

It carries out the reaction GTP + AH2 + S-adenosyl-L-methionine = (8S)-3',8-cyclo-7,8-dihydroguanosine 5'-triphosphate + 5'-deoxyadenosine + L-methionine + A + H(+). It participates in cofactor biosynthesis; molybdopterin biosynthesis. Its function is as follows. Catalyzes the cyclization of GTP to (8S)-3',8-cyclo-7,8-dihydroguanosine 5'-triphosphate. The polypeptide is GTP 3',8-cyclase (Synechococcus elongatus (strain ATCC 33912 / PCC 7942 / FACHB-805) (Anacystis nidulans R2)).